The following is a 429-amino-acid chain: Ribosomal RNA small subunit methyltransferase B (429 aa).

S-adenosyl-L-methionine-binding positions include 254–260 (CAAPGGK), D277, D303, and D322. The Nucleophile role is filled by C375.

This sequence belongs to the class I-like SAM-binding methyltransferase superfamily. RsmB/NOP family.

The protein localises to the cytoplasm. It catalyses the reaction cytidine(967) in 16S rRNA + S-adenosyl-L-methionine = 5-methylcytidine(967) in 16S rRNA + S-adenosyl-L-homocysteine + H(+). Functionally, specifically methylates the cytosine at position 967 (m5C967) of 16S rRNA. The chain is Ribosomal RNA small subunit methyltransferase B from Escherichia coli O7:K1 (strain IAI39 / ExPEC).